We begin with the raw amino-acid sequence, 464 residues long: Kynureninase 2 (464 aa).

Pyridoxal 5'-phosphate-binding positions include L135, T136, 163–166, D248, H251, and Y273; that span reads FPSD. The residue at position 274 (K274) is an N6-(pyridoxal phosphate)lysine. The pyridoxal 5'-phosphate site is built by W313 and N341.

Belongs to the kynureninase family. Homodimer. Requires pyridoxal 5'-phosphate as cofactor.

It localises to the cytoplasm. It carries out the reaction L-kynurenine + H2O = anthranilate + L-alanine + H(+). The enzyme catalyses 3-hydroxy-L-kynurenine + H2O = 3-hydroxyanthranilate + L-alanine + H(+). Its pathway is amino-acid degradation; L-kynurenine degradation; L-alanine and anthranilate from L-kynurenine: step 1/1. It functions in the pathway cofactor biosynthesis; NAD(+) biosynthesis; quinolinate from L-kynurenine: step 2/3. Functionally, catalyzes the cleavage of L-kynurenine (L-Kyn) and L-3-hydroxykynurenine (L-3OHKyn) into anthranilic acid (AA) and 3-hydroxyanthranilic acid (3-OHAA), respectively. The polypeptide is Kynureninase 2 (bna5-2) (Aspergillus clavatus (strain ATCC 1007 / CBS 513.65 / DSM 816 / NCTC 3887 / NRRL 1 / QM 1276 / 107)).